A 56-amino-acid chain; its full sequence is Small ribosomal subunit protein uS14 (56 aa).

Zn(2+)-binding residues include Cys-21, Cys-24, Cys-39, and Cys-42.

It belongs to the universal ribosomal protein uS14 family. As to quaternary structure, component of the 40S small ribosomal subunit. It depends on Zn(2+) as a cofactor.

Its subcellular location is the cytoplasm. It is found in the cytosol. The protein resides in the rough endoplasmic reticulum. This is Small ribosomal subunit protein uS14 (RpS29) from Culex quinquefasciatus (Southern house mosquito).